We begin with the raw amino-acid sequence, 242 residues long: 1-(5-phosphoribosyl)-5-[(5-phosphoribosylamino)methylideneamino] imidazole-4-carboxamide isomerase (242 aa).

Catalysis depends on Asp8, which acts as the Proton acceptor. Catalysis depends on Asp129, which acts as the Proton donor.

It belongs to the HisA/HisF family.

Its subcellular location is the cytoplasm. The enzyme catalyses 1-(5-phospho-beta-D-ribosyl)-5-[(5-phospho-beta-D-ribosylamino)methylideneamino]imidazole-4-carboxamide = 5-[(5-phospho-1-deoxy-D-ribulos-1-ylimino)methylamino]-1-(5-phospho-beta-D-ribosyl)imidazole-4-carboxamide. It participates in amino-acid biosynthesis; L-histidine biosynthesis; L-histidine from 5-phospho-alpha-D-ribose 1-diphosphate: step 4/9. The protein is 1-(5-phosphoribosyl)-5-[(5-phosphoribosylamino)methylideneamino] imidazole-4-carboxamide isomerase of Clostridium botulinum (strain Kyoto / Type A2).